The sequence spans 404 residues: Cysteine desulfurase IscS (404 aa).

Pyridoxal 5'-phosphate is bound by residues 75 to 76, asparagine 155, glutamine 183, and 203 to 205; these read AT and SGH. Lysine 206 is modified (N6-(pyridoxal phosphate)lysine). Threonine 243 serves as a coordination point for pyridoxal 5'-phosphate. Cysteine 328 functions as the Cysteine persulfide intermediate in the catalytic mechanism. Residue cysteine 328 participates in [2Fe-2S] cluster binding.

The protein belongs to the class-V pyridoxal-phosphate-dependent aminotransferase family. NifS/IscS subfamily. As to quaternary structure, homodimer. Forms a heterotetramer with IscU, interacts with other sulfur acceptors. The cofactor is pyridoxal 5'-phosphate.

It localises to the cytoplasm. The enzyme catalyses (sulfur carrier)-H + L-cysteine = (sulfur carrier)-SH + L-alanine. Its pathway is cofactor biosynthesis; iron-sulfur cluster biosynthesis. Master enzyme that delivers sulfur to a number of partners involved in Fe-S cluster assembly, tRNA modification or cofactor biosynthesis. Catalyzes the removal of elemental sulfur atoms from cysteine to produce alanine. Functions as a sulfur delivery protein for Fe-S cluster synthesis onto IscU, an Fe-S scaffold assembly protein, as well as other S acceptor proteins. This chain is Cysteine desulfurase IscS, found in Pectobacterium atrosepticum (strain SCRI 1043 / ATCC BAA-672) (Erwinia carotovora subsp. atroseptica).